The primary structure comprises 235 residues: Secretory carrier-associated membrane protein 5 (235 aa).

Residues 1–39 (MAEKVNNFPPLPKFIPLKPCFYQDFEADIPPQHLSLTKR) are Cytoplasmic-facing. Residues 40-60 (LYYLWMLNSVTLAVNLVGCLA) form a helical membrane-spanning segment. Topologically, residues 61 to 67 (WLIGGGG) are extracellular. The helical transmembrane segment at 68–88 (ATNFGLAFLWLILFTPCSYVC) threads the bilayer. Residues 89–102 (WFRPIYKAFKTDSS) are Cytoplasmic-facing. A helical membrane pass occupies residues 103–125 (FSFMAFFFTFMAQLVISIIQAVG). Topologically, residues 126–148 (IPGWGVCGWIATISFFGTNIGSA) are extracellular. A helical transmembrane segment spans residues 149–169 (VVMLIPTVMFTVVAVFSFIAL). Over 170 to 235 (SMVHKFYRGS…TPNYTYSNEM (66 aa)) the chain is Cytoplasmic.

The protein belongs to the SCAMP family. SCAMP5 subfamily. As to quaternary structure, interacts (via C-terminal part) with SYT1 and SYT2; interaction with synaptotagmins making a link with the SNARE molecules. Interacts with SLC9A7. As to expression, brain-specific.

The protein resides in the cell membrane. It localises to the golgi apparatus membrane. The protein localises to the golgi apparatus. It is found in the trans-Golgi network membrane. Its subcellular location is the recycling endosome membrane. The protein resides in the cytoplasmic vesicle. It localises to the secretory vesicle. The protein localises to the synaptic vesicle membrane. Its function is as follows. Required for the calcium-dependent exocytosis of signal sequence-containing cytokines such as CCL5. Probably acts in cooperation with the SNARE machinery. In Mus musculus (Mouse), this protein is Secretory carrier-associated membrane protein 5 (Scamp5).